The chain runs to 47 residues: Type II secretion system protein N (47 aa).

It belongs to the GSP N family.

The protein resides in the cell inner membrane. In terms of biological role, involved in a type II secretion system (T2SS, formerly general secretion pathway, GSP) for the export of proteins. The chain is Type II secretion system protein N (exeN) from Aeromonas salmonicida.